Reading from the N-terminus, the 348-residue chain is Fe(3+) ions import ATP-binding protein FbpC (348 aa).

The ABC transporter domain maps to 6 to 236 (LSLEGATVRF…PADAFVARFL (231 aa)). Residue 38 to 45 (GPSGSGKS) participates in ATP binding.

This sequence belongs to the ABC transporter superfamily. Fe(3+) ion importer (TC 3.A.1.10) family. In terms of assembly, the complex is composed of two ATP-binding proteins (FbpC), two transmembrane proteins (FbpB) and a solute-binding protein (FbpA).

It localises to the cell membrane. It catalyses the reaction Fe(3+)(out) + ATP + H2O = Fe(3+)(in) + ADP + phosphate + H(+). Functionally, part of the ABC transporter complex FbpABC involved in Fe(3+) ions import. Responsible for energy coupling to the transport system. The sequence is that of Fe(3+) ions import ATP-binding protein FbpC from Streptomyces coelicolor (strain ATCC BAA-471 / A3(2) / M145).